The following is a 268-amino-acid chain: UPF0719 transmembrane protein aq_1349 (268 aa).

The next 8 membrane-spanning stretches (helical) occupy residues 5–24 (LIAL…LFFR), 37–59 (NLAL…YSVY), 69–91 (LYLI…IFLR), 104–126 (AGAG…ASFW), 130–152 (SFIL…LFIS), 173–195 (FSAS…GAIS), 210–232 (VLYF…FLLF), and 245–267 (NLSA…LAVM).

It belongs to the UPF0719 family.

Its subcellular location is the cell membrane. The sequence is that of UPF0719 transmembrane protein aq_1349 from Aquifex aeolicus (strain VF5).